The primary structure comprises 32 residues: Jingzhaotoxin F4-32.60 (32 aa).

Cystine bridges form between C2/C17, C9/C22, and C16/C29. D31 is modified (aspartic acid 1-amide).

Belongs to the neurotoxin 10 (Hwtx-1) family. 30 (Jztx-14) subfamily. Post-translationally, amidated as well as non-amidated forms are found in the venom. As to expression, expressed by the venom gland.

It localises to the secreted. Functionally, probable ion channel inhibitor. This Chilobrachys guangxiensis (Chinese earth tiger tarantula) protein is Jingzhaotoxin F4-32.60.